The chain runs to 504 residues: MTEQKYIVALDQGTTSSRAVILDHDANIVSVSQREFTQIYPEAGWVEHDPLEIYATQSSTLVETLAKAGIRSDQIAGIGITNQRETTIVWNKETGKPVYNAIVWQCRRTADTCEKLKEAGLEEYIRENTGLVVDPYFSGTKIKWILDNVEGAREDAEAGKLLFGTVDTWLVWKMTQGRVHVTDYTNASRTMVFNINTLQWDEKLLKELDIPLSMMPEVKSSSEVYGETNIGGKGGTRIPIAGIAGDQQAALYGQMCVEQGQAKNTYGTGCFLLMNTGKEKVTSRNGLLTTLACGPRGEASYALEGAVFMGGASIQWLRDEMKLLADAKDSEYFATKVDTSNGVYVVPAFTGLGAPYWDAYARGTIVGLTRGCGSNHIIRATLESIAYQTRDVIDAMQADSGIKLSALRVDGGAVANNFLMQFQSDVLDVAVHRPKVTEVTALGAAYLAGLAVGFWNGLDELADKAVIDRSFEPHHDEEKRNQRYRGWKRAVKCAQAWAELHDEE.

Residue T14 participates in ADP binding. Residues T14, T15, and S16 each coordinate ATP. T14 serves as a coordination point for sn-glycerol 3-phosphate. R18 contacts ADP. Residues R84, E85, Y136, and D246 each contribute to the sn-glycerol 3-phosphate site. Residues R84, E85, Y136, D246, and Q247 each coordinate glycerol. ADP contacts are provided by T268 and G311. Residues T268, G311, Q315, and G412 each coordinate ATP. Positions 412 and 416 each coordinate ADP.

This sequence belongs to the FGGY kinase family.

The catalysed reaction is glycerol + ATP = sn-glycerol 3-phosphate + ADP + H(+). It participates in polyol metabolism; glycerol degradation via glycerol kinase pathway; sn-glycerol 3-phosphate from glycerol: step 1/1. Its activity is regulated as follows. Inhibited by fructose 1,6-bisphosphate (FBP). Functionally, key enzyme in the regulation of glycerol uptake and metabolism. Catalyzes the phosphorylation of glycerol to yield sn-glycerol 3-phosphate. In Aliivibrio fischeri (strain ATCC 700601 / ES114) (Vibrio fischeri), this protein is Glycerol kinase.